The sequence spans 226 residues: Prolactin (226 aa).

A signal peptide spans 1–29 (MNSQGSDRKAVTLLLLVMSNLLFCQNAHP). The cysteines at positions 33 and 38 are disulfide-linked. Phosphoserine is present on residues Ser-53 and Ser-117. 2 cysteine pairs are disulfide-bonded: Cys-85/Cys-201 and Cys-218/Cys-226.

This sequence belongs to the somatotropin/prolactin family. As to quaternary structure, interacts with PRLR.

Its subcellular location is the secreted. In terms of biological role, prolactin acts primarily on the mammary gland by promoting lactation. The sequence is that of Prolactin (PRL) from Mesocricetus auratus (Golden hamster).